A 396-amino-acid polypeptide reads, in one-letter code: Elongation factor Tu (396 aa).

Positions 10-205 (KPHVNIGTIG…ACDESIPDPV (196 aa)) constitute a tr-type G domain. The segment at 19–26 (GHVDHGKT) is G1. 19–26 (GHVDHGKT) lines the GTP pocket. Mg(2+) is bound at residue T26. A G2 region spans residues 62–66 (GITIN). Residues 83–86 (DAPG) form a G3 region. GTP-binding positions include 83–87 (DAPGH) and 138–141 (NKCD). The segment at 138–141 (NKCD) is G4. The segment at 175–177 (SAL) is G5.

Belongs to the TRAFAC class translation factor GTPase superfamily. Classic translation factor GTPase family. EF-Tu/EF-1A subfamily. As to quaternary structure, monomer.

The protein localises to the cytoplasm. It carries out the reaction GTP + H2O = GDP + phosphate + H(+). Its function is as follows. GTP hydrolase that promotes the GTP-dependent binding of aminoacyl-tRNA to the A-site of ribosomes during protein biosynthesis. The sequence is that of Elongation factor Tu from Corynebacterium kroppenstedtii (strain DSM 44385 / JCM 11950 / CIP 105744 / CCUG 35717).